The following is a 111-amino-acid chain: MFGKAGLGGLMKQAQQMQENMKKAQAKLAETEIEGEAGNGLVKITMTCAHEVRKIDISPDLIQEAADDKEMLEDLILAALKSARGKAEETANKTMGAFTQGLPPGVGDFFR.

The protein belongs to the YbaB/EbfC family. In terms of assembly, homodimer.

The protein resides in the cytoplasm. The protein localises to the nucleoid. Functionally, binds to DNA and alters its conformation. May be involved in regulation of gene expression, nucleoid organization and DNA protection. The chain is Nucleoid-associated protein NMC1380 from Neisseria meningitidis serogroup C / serotype 2a (strain ATCC 700532 / DSM 15464 / FAM18).